A 361-amino-acid polypeptide reads, in one-letter code: DNA-(apurinic or apyrimidinic site) endonuclease (361 aa).

The interval 1-90 (MTSRTKKLKM…TNKTTASVSI (90 aa)) is disordered. The segment covering 25 to 39 (TSEEEKEEVEEEEEE) has biased composition (acidic residues). Residues 41–44 (KKRK) carry the Nuclear localization signal motif. The segment covering 43–64 (RKLVKKTPAKKAPAKKAAAKKK) has biased composition (basic residues). Acidic residues predominate over residues 68-80 (EDEDEEEKEEEEE). Glutamate 139 lines the Mg(2+) pocket. Tyrosine 211 is a catalytic residue. Positions 252, 254, and 350 each coordinate Mg(2+). Aspartate 252 functions as the Proton donor/acceptor in the catalytic mechanism.

Belongs to the DNA repair enzymes AP/ExoA family. The cofactor is Mg(2+). It depends on Mn(2+) as a cofactor.

It localises to the nucleus. This chain is DNA-(apurinic or apyrimidinic site) endonuclease (apeA), found in Dictyostelium discoideum (Social amoeba).